The following is a 605-amino-acid chain: Elongation factor 4 (605 aa).

Residues 9-192 (SRIRNFCIIA…AIIARVPSPA (184 aa)) enclose the tr-type G domain. Residues 21–26 (DHGKST) and 139–142 (NKID) contribute to the GTP site.

The protein belongs to the TRAFAC class translation factor GTPase superfamily. Classic translation factor GTPase family. LepA subfamily.

The protein resides in the cell inner membrane. The enzyme catalyses GTP + H2O = GDP + phosphate + H(+). Required for accurate and efficient protein synthesis under certain stress conditions. May act as a fidelity factor of the translation reaction, by catalyzing a one-codon backward translocation of tRNAs on improperly translocated ribosomes. Back-translocation proceeds from a post-translocation (POST) complex to a pre-translocation (PRE) complex, thus giving elongation factor G a second chance to translocate the tRNAs correctly. Binds to ribosomes in a GTP-dependent manner. In Chlorobium phaeovibrioides (strain DSM 265 / 1930) (Prosthecochloris vibrioformis (strain DSM 265)), this protein is Elongation factor 4.